Reading from the N-terminus, the 643-residue chain is Protein disulfide-isomerase A4 (643 aa).

The N-terminal stretch at 1-20 is a signal peptide; it reads MKLRKAWLLVLLLALTQLLA. 2 Thioredoxin domains span residues 21–167 and 167–299; these read AASA…EVSQ and QPDW…EFLK. Residues 24–58 are disordered; that stretch reads AEDAHEDASDSENPIEDDDDEEEDEEDEDDLEVKE. Residues 32–56 show a composition bias toward acidic residues; it reads SDSENPIEDDDDEEEDEEDEDDLEV. Positions 89-92 match the CXXC motif; the sequence is CGHC. 2 disulfide bridges follow: C89/C92 and C204/C207. K364 is subject to N6-acetyllysine. Residues 503–634 enclose the Thioredoxin 3 domain; sequence FKKGKLKPVI…LSKFIDEHAT (132 aa). The CXXC signature appears at 553 to 556; the sequence is CGHC. C553 and C556 are oxidised to a cystine. The short motif at 640 to 643 is the Prevents secretion from ER element; sequence KEEL.

Belongs to the protein disulfide isomerase family. In terms of assembly, part of a large chaperone multiprotein complex comprising DNAJB11, HSP90B1, HSPA5, HYOU, PDIA2, PDIA4, PDIA6, PPIB, SDF2L1, UGGT1 and very small amounts of ERP29, but not, or at very low levels, CALR nor CANX. Component of a complex containing at least CRELD2, MANF, MATN3 and PDIA4. O-glycosylated.

Its subcellular location is the endoplasmic reticulum lumen. The protein localises to the melanosome. It carries out the reaction Catalyzes the rearrangement of -S-S- bonds in proteins.. The sequence is that of Protein disulfide-isomerase A4 (Pdia4) from Rattus norvegicus (Rat).